Consider the following 78-residue polypeptide: Large ribosomal subunit protein bL28 (78 aa).

Belongs to the bacterial ribosomal protein bL28 family.

This Psychrobacter sp. (strain PRwf-1) protein is Large ribosomal subunit protein bL28.